The primary structure comprises 246 residues: Isoprenyl transferase (246 aa).

Residue aspartate 18 is part of the active site. Aspartate 18 contacts Mg(2+). Substrate contacts are provided by residues 19–22, tryptophan 23, arginine 31, histidine 35, and 63–65; these read GNGR and SAE. The Proton acceptor role is filled by asparagine 66. Substrate-binding positions include tryptophan 67, arginine 69, arginine 186, and 192–194; that span reads RIS. Glutamate 205 is a binding site for Mg(2+).

It belongs to the UPP synthase family. Homodimer. Requires Mg(2+) as cofactor.

Its function is as follows. Catalyzes the condensation of isopentenyl diphosphate (IPP) with allylic pyrophosphates generating different type of terpenoids. This is Isoprenyl transferase from Geobacter sulfurreducens (strain ATCC 51573 / DSM 12127 / PCA).